The primary structure comprises 336 residues: Atypical chemokine receptor 1 (336 aa).

Topologically, residues 1-63 are extracellular; the sequence is MGNCLHTAEL…CNLLDDSALP (63 aa). N-linked (GlcNAc...) asparagine glycosylation is found at N16, N27, and N33. Cystine bridges form between C51–C276 and C129–C195. Residues 64–84 traverse the membrane as a helical segment; the sequence is FFILTSVLGILASSTVLFILF. Residues 85-95 are Cytoplasmic-facing; it reads RPLFRWQLCPG. The chain crosses the membrane as a helical span at residues 96-116; sequence WPVLAQLAVGSALFSIVVPIL. The Extracellular segment spans residues 117–129; the sequence is APGLGSTHSSALC. A helical transmembrane segment spans residues 130–153; that stretch reads SLGYCVWYGSAFAQALLLGCHASL. Residues 154-166 are Cytoplasmic-facing; it reads GHRLGAGQVPGLT. A helical transmembrane segment spans residues 167 to 187; the sequence is LGLTVGIWGVAALLTLPVTLA. Topologically, residues 188-207 are extracellular; sequence SGASGGLCTPIHSTELKALQ. The helical transmembrane segment at 208–228 threads the bilayer; sequence ATHTVACLAIFVLLPLGLFGA. The Cytoplasmic segment spans residues 229–244; that stretch reads KGLKKALGMGPGPWMN. Residues 245-265 form a helical membrane-spanning segment; it reads ILWAWFIFWWPHGVVLGLDFL. The Extracellular portion of the chain corresponds to 266 to 287; it reads VRSKLLLLSTCLAQQALDLLLN. Residues 288–308 traverse the membrane as a helical segment; that stretch reads LAEALAILHCVATPLILALFY. The Cytoplasmic portion of the chain corresponds to 309-336; it reads HQATRTLLPSLPLPEGWSSHLDTLGSKS.

Belongs to the G-protein coupled receptor 1 family. Atypical chemokine receptor subfamily.

The protein localises to the early endosome. The protein resides in the recycling endosome. Its subcellular location is the membrane. Atypical chemokine receptor that controls chemokine levels and localization via high-affinity chemokine binding that is uncoupled from classic ligand-driven signal transduction cascades, resulting instead in chemokine sequestration, degradation, or transcytosis. Also known as interceptor (internalizing receptor) or chemokine-scavenging receptor or chemokine decoy receptor. Has a promiscuous chemokine-binding profile, interacting with inflammatory chemokines of both the CXC and the CC subfamilies but not with homeostatic chemokines. Acts as a receptor for chemokines including CCL2, CCL5, CCL7, CCL11, CCL13, CCL14, CCL17, CXCL5, CXCL6, IL8/CXCL8, CXCL11, GRO, RANTES, MCP-1 and TARC. May regulate chemokine bioavailability and, consequently, leukocyte recruitment through two distinct mechanisms: when expressed in endothelial cells, it sustains the abluminal to luminal transcytosis of tissue-derived chemokines and their subsequent presentation to circulating leukocytes; when expressed in erythrocytes, serves as blood reservoir of cognate chemokines but also as a chemokine sink, buffering potential surges in plasma chemokine levels. The polypeptide is Atypical chemokine receptor 1 (ACKR1) (Gorilla gorilla gorilla (Western lowland gorilla)).